The chain runs to 217 residues: Thymidylate kinase (217 aa).

12–19 (GIDGSGKS) contacts ATP.

This sequence belongs to the thymidylate kinase family.

It carries out the reaction dTMP + ATP = dTDP + ADP. Functionally, phosphorylation of dTMP to form dTDP in both de novo and salvage pathways of dTTP synthesis. This is Thymidylate kinase from Cereibacter sphaeroides (strain ATCC 17023 / DSM 158 / JCM 6121 / CCUG 31486 / LMG 2827 / NBRC 12203 / NCIMB 8253 / ATH 2.4.1.) (Rhodobacter sphaeroides).